Consider the following 257-residue polypeptide: Imidazole glycerol phosphate synthase subunit HisF (257 aa).

Residues aspartate 12 and aspartate 131 contribute to the active site.

It belongs to the HisA/HisF family. In terms of assembly, heterodimer of HisH and HisF.

It is found in the cytoplasm. It catalyses the reaction 5-[(5-phospho-1-deoxy-D-ribulos-1-ylimino)methylamino]-1-(5-phospho-beta-D-ribosyl)imidazole-4-carboxamide + L-glutamine = D-erythro-1-(imidazol-4-yl)glycerol 3-phosphate + 5-amino-1-(5-phospho-beta-D-ribosyl)imidazole-4-carboxamide + L-glutamate + H(+). It participates in amino-acid biosynthesis; L-histidine biosynthesis; L-histidine from 5-phospho-alpha-D-ribose 1-diphosphate: step 5/9. IGPS catalyzes the conversion of PRFAR and glutamine to IGP, AICAR and glutamate. The HisF subunit catalyzes the cyclization activity that produces IGP and AICAR from PRFAR using the ammonia provided by the HisH subunit. The protein is Imidazole glycerol phosphate synthase subunit HisF of Nocardia farcinica (strain IFM 10152).